The chain runs to 485 residues: Glutamate--tRNA ligase (485 aa).

A 'HIGH' region motif is present at residues 10–20 (PSPTGHLHIGN). A 'KMSKS' region motif is present at residues 253–257 (KLSKR). An ATP-binding site is contributed by K256.

Belongs to the class-I aminoacyl-tRNA synthetase family. Glutamate--tRNA ligase type 1 subfamily. In terms of assembly, monomer.

It is found in the cytoplasm. The enzyme catalyses tRNA(Glu) + L-glutamate + ATP = L-glutamyl-tRNA(Glu) + AMP + diphosphate. Functionally, catalyzes the attachment of glutamate to tRNA(Glu) in a two-step reaction: glutamate is first activated by ATP to form Glu-AMP and then transferred to the acceptor end of tRNA(Glu). The sequence is that of Glutamate--tRNA ligase from Enterococcus faecalis (strain ATCC 700802 / V583).